The sequence spans 320 residues: Malate dehydrogenase (320 aa).

NAD(+)-binding positions include 10–15 (GSGMIG) and D34. Residues R83 and R89 each coordinate substrate. NAD(+) contacts are provided by residues N96 and 119–121 (ITN). N121 and R152 together coordinate substrate. H176 (proton acceptor) is an active-site residue.

The protein belongs to the LDH/MDH superfamily. MDH type 3 family.

It carries out the reaction (S)-malate + NAD(+) = oxaloacetate + NADH + H(+). In terms of biological role, catalyzes the reversible oxidation of malate to oxaloacetate. The sequence is that of Malate dehydrogenase from Bartonella tribocorum (strain CIP 105476 / IBS 506).